A 554-amino-acid chain; its full sequence is Malate synthase 1 (554 aa).

Arg-177 functions as the Proton acceptor in the catalytic mechanism. Residue Asp-457 is the Proton donor of the active site. Residues 552–554 (SKL) carry the SKL peroxisome targeting motif motif.

It belongs to the malate synthase family. Interacts with PEX9.

The protein localises to the peroxisome matrix. The enzyme catalyses glyoxylate + acetyl-CoA + H2O = (S)-malate + CoA + H(+). Its pathway is carbohydrate metabolism; glyoxylate cycle; (S)-malate from isocitrate: step 2/2. Functionally, malate synthase which takes part in the glyoxylate cycle. MLS1 activity is essential for cells to grow on oleic acid as a sole carbon source. Two steps of the glyoxylate cycle take place in the cytosol, the splitting of isocitrate into succinate and glyoxylate, and the dehydrogenation of malate to oxaloacetate. However, the formation of malate from glyoxylate and acetyl-CoA undertaken MLS1, occurs in the peroxisomes when cells are grown on oleic acid. The source of acetyl-CoA being either peroxisomal when breaking down fatty acids, or cytosolic when extra-cellular two-carbon substrates are used, therefore, although not strictly essential, the peroxisomal localization of MLS1 appears to be advantageous for cells growing on oleic acid, in that acetyl-CoA production and utilization are thereby intimately compartmentalized together to increase efficiency. In Saccharomyces cerevisiae (strain YJM789) (Baker's yeast), this protein is Malate synthase 1.